A 70-amino-acid chain; its full sequence is MTYTQASGYSQGYAGSTSYFGGMDCGSYLTPMHHQLPGPGATLSPMGTNAVTSHLNQSPASLSTQGYGAS.

The segment at 34 to 70 (HQLPGPGATLSPMGTNAVTSHLNQSPASLSTQGYGAS) is disordered. The segment covering 45–70 (PMGTNAVTSHLNQSPASLSTQGYGAS) has biased composition (polar residues).

This sequence belongs to the paired homeobox family. Bicoid subfamily.

It is found in the nucleus. Transcription factor probably involved in the development of the brain and the sense organs. Can bind to the bicoid/BCD target sequence (BTS): 5'-TCTAATCCC-3'. This Rattus norvegicus (Rat) protein is Homeobox protein OTX2 (Otx2).